Here is a 186-residue protein sequence, read N- to C-terminus: TATA-box-binding protein 2 (186 aa).

Tandem repeats lie at residues Ile10 to Leu86 and Val101 to Ile179. Residues Lys53 and Lys63 each participate in a glycyl lysine isopeptide (Lys-Gly) (interchain with G-Cter in SAMP2) cross-link.

It belongs to the TBP family.

In terms of biological role, general factor that plays a role in the activation of archaeal genes transcribed by RNA polymerase. Binds specifically to the TATA box promoter element which lies close to the position of transcription initiation. The protein is TATA-box-binding protein 2 (tbp2) of Haloferax volcanii (strain ATCC 29605 / DSM 3757 / JCM 8879 / NBRC 14742 / NCIMB 2012 / VKM B-1768 / DS2) (Halobacterium volcanii).